A 505-amino-acid chain; its full sequence is Serine carboxypeptidase-like 47 (505 aa).

An N-terminal signal peptide occupies residues 1 to 22 (MEAKTFFLFMLFIFSQSWLSTS). 3 N-linked (GlcNAc...) asparagine glycosylation sites follow: Asn37, Asn86, and Asn122. Disulfide bonds link Cys138–Cys378, Cys306–Cys321, and Cys344–Cys349. Residue Ser228 is part of the active site. An N-linked (GlcNAc...) asparagine glycan is attached at Asn301. Asp416 is an active-site residue. Asn432 and Asn444 each carry an N-linked (GlcNAc...) asparagine glycan. His473 is an active-site residue.

The protein belongs to the peptidase S10 family. Expressed in roots, flowers and siliques.

The protein localises to the secreted. In terms of biological role, probable carboxypeptidase. The polypeptide is Serine carboxypeptidase-like 47 (SCPL47) (Arabidopsis thaliana (Mouse-ear cress)).